Reading from the N-terminus, the 133-residue chain is Fluoride-specific ion channel FluC 4 (133 aa).

The next 3 membrane-spanning stretches (helical) occupy residues 7 to 27 (ILVL…SGYV), 37 to 57 (WGTF…AGLG), and 60 to 80 (LGGI…LLGG). Residues glycine 79 and threonine 82 each coordinate Na(+). A helical transmembrane segment spans residues 107 to 127 (IVASALLCVLAVAAGYGGIMW).

This sequence belongs to the fluoride channel Fluc/FEX (TC 1.A.43) family.

It is found in the cell inner membrane. It carries out the reaction fluoride(in) = fluoride(out). Na(+) is not transported, but it plays an essential structural role and its presence is essential for fluoride channel function. Fluoride-specific ion channel. Important for reducing fluoride concentration in the cell, thus reducing its toxicity. This chain is Fluoride-specific ion channel FluC 4, found in Brucella abortus biovar 1 (strain 9-941).